The following is a 545-amino-acid chain: MATNYIFVTGGVVSSLGKGIAAASLASILEARGLNVTIMKLDPYINVDPGTMSPTQHGEVFVTQDGAETDLDLGHYERFIRSKMSKANNFTSGKIYSEVLRKERRGDYLGATIQVIPHITNEIKARVIEGGKGRDVVIVEVGGTVGDIESLPFLEALRQLAVDVGREKTLFMHLTLVPYIPTAGEVKTKPTQHSVKELLSIGIQPDVLICRSDRTIPANERKKIALFCNVPERAVISLKDVDSIYRIPELLKSQALDSFVCDRFRLECPEADLSEWEQVLYRQANPTGEVTIGMVGKYVELPDAYKSVNEALKHAGLTSRLSVNIKYIDSQDIETKGTELLDGLDAILVPGGFGYRGVEGKIRTAQYARENNIPYLGICLGMQIALIEYARNVAGLTEANSSEFDPACSQPVIGLITEWQDESGNVETRTDKSDLGGTMRLGAQQCHLIEGTKAREIYGAEAIVERHRHRYEVNNVLLPTIEAAGLKVSGVSADRKLVEIIEVPNHPWFIAAQFHPEFTSTPRDGHPLFAGFVAAAKAYQDSRKA.

Positions 1 to 266 (MATNYIFVTG…DSFVCDRFRL (266 aa)) are amidoligase domain. S14 provides a ligand contact to CTP. S14 is a UTP binding site. ATP-binding positions include 15-20 (SLGKGI) and D72. Mg(2+) contacts are provided by D72 and E140. CTP is bound by residues 147-149 (DIE), 187-192 (KTKPTQ), and K223. UTP contacts are provided by residues 187–192 (KTKPTQ) and K223. Residue 239 to 241 (KDV) participates in ATP binding. Positions 291–542 (TIGMVGKYVE…VAAAKAYQDS (252 aa)) constitute a Glutamine amidotransferase type-1 domain. G352 provides a ligand contact to L-glutamine. Residue C379 is the Nucleophile; for glutamine hydrolysis of the active site. L-glutamine contacts are provided by residues 380 to 383 (LGMQ), E403, and R470. Residues H515 and E517 contribute to the active site.

It belongs to the CTP synthase family. Homotetramer.

It catalyses the reaction UTP + L-glutamine + ATP + H2O = CTP + L-glutamate + ADP + phosphate + 2 H(+). The catalysed reaction is L-glutamine + H2O = L-glutamate + NH4(+). The enzyme catalyses UTP + NH4(+) + ATP = CTP + ADP + phosphate + 2 H(+). It functions in the pathway pyrimidine metabolism; CTP biosynthesis via de novo pathway; CTP from UDP: step 2/2. With respect to regulation, allosterically activated by GTP, when glutamine is the substrate; GTP has no effect on the reaction when ammonia is the substrate. The allosteric effector GTP functions by stabilizing the protein conformation that binds the tetrahedral intermediate(s) formed during glutamine hydrolysis. Inhibited by the product CTP, via allosteric rather than competitive inhibition. Catalyzes the ATP-dependent amination of UTP to CTP with either L-glutamine or ammonia as the source of nitrogen. Regulates intracellular CTP levels through interactions with the four ribonucleotide triphosphates. This chain is CTP synthase, found in Haemophilus ducreyi (strain 35000HP / ATCC 700724).